The chain runs to 693 residues: Alpha-glucosidase (693 aa).

Catalysis depends on residues aspartate 320 and glutamate 323. The Proton donor role is filled by aspartate 416.

The protein belongs to the glycosyl hydrolase 31 family.

The protein localises to the cytoplasm. The catalysed reaction is Hydrolysis of terminal, non-reducing (1-&gt;4)-linked alpha-D-glucose residues with release of alpha-D-glucose.. In terms of biological role, major soluble alpha-glucosidase. This is Alpha-glucosidase (malA) from Saccharolobus solfataricus (strain ATCC 35092 / DSM 1617 / JCM 11322 / P2) (Sulfolobus solfataricus).